Here is a 645-residue protein sequence, read N- to C-terminus: 1-phosphatidylinositol 4,5-bisphosphate phosphodiesterase zeta-1 (645 aa).

An EF-hand domain is found at 42 to 77 (CHFAHVKRIFKENDRHNQGRITTEDFRTIYRCIVHR). The PI-PLC X-box domain maps to 162 to 306 (QDMNKPLNDY…LKFKILVKNK (145 aa)). Active-site residues include H177 and H222. In terms of domain architecture, PI-PLC Y-box spans 385-501 (LSDLVIYTKA…GYVLKPDFLR (117 aa)). The 125-residue stretch at 501-625 (RDTTLGFNPN…KGYRRVPLFS (125 aa)) folds into the C2 domain.

As to quaternary structure, interacts via its C2 domain with PtdIns(3)P and, to a lesser extent, PtdIns(5)P in vitro. Requires Ca(2+) as cofactor.

Its subcellular location is the nucleus. The protein resides in the cytoplasm. The protein localises to the perinuclear region. The catalysed reaction is a 1,2-diacyl-sn-glycero-3-phospho-(1D-myo-inositol-4,5-bisphosphate) + H2O = 1D-myo-inositol 1,4,5-trisphosphate + a 1,2-diacyl-sn-glycerol + H(+). The production of the second messenger molecules diacylglycerol (DAG) and inositol 1,4,5-trisphosphate (IP3) is mediated by activated phosphatidylinositol-specific phospholipase C enzymes. In vitro, hydrolyzes PtdIns(4,5)P2 in a Ca(2+)-dependent manner. Triggers intracellular Ca(2+) oscillations in oocytes solely during M phase and is involved in inducing oocyte activation and initiating embryonic development up to the blastocyst stage. Is therefore a strong candidate for the egg-activating soluble sperm factor that is transferred from the sperm into the egg cytoplasm following gamete membrane fusion. May exert an inhibitory effect on phospholipase-C-coupled processes that depend on calcium ions and protein kinase C, including CFTR trafficking and function. This Rattus norvegicus (Rat) protein is 1-phosphatidylinositol 4,5-bisphosphate phosphodiesterase zeta-1.